A 483-amino-acid chain; its full sequence is Shutoff alkaline exonuclease (483 aa).

The protein belongs to the herpesviridae alkaline nuclease family. As to quaternary structure, forms a complex with the DNA polymerase, the DNA polymerase processivity factor, and the major DNA binding protein.

The protein localises to the host nucleus. The protein resides in the host cytoplasm. Its function is as follows. Plays a role in processing non linear or branched viral DNA intermediates in order to promote the production of mature packaged unit-length linear progeny viral DNA molecules. Exhibits endonuclease and exonuclease activities and accepts both double-stranded and single-stranded DNA as substrate. Exonuclease digestion of DNA is in the 5'-&gt; 3' direction and the products are 5'-monophosphate nucleosides. Additionally, forms a recombinase with the major DNA-binding protein, which displays strand exchange activity. Also acts as a cytoplasmic RNA endonuclease that induces degradation of the majority of the cellular messenger RNAs during early lytic infection. The resulting inhibition of cellular protein synthesis serves to ensure maximal viral gene expression and evasion from host immune response. Internally cleaves host mRNAs which are then degraded by the cellular exonuclease XRN1. Bypasses therefore the regulatory steps of deadenylation and decapping normally required for XRN1 activation. This chain is Shutoff alkaline exonuclease (37), found in Saimiriine herpesvirus 2 (strain 11) (SaHV-2).